A 690-amino-acid polypeptide reads, in one-letter code: Crooked neck-like protein 1 (690 aa).

16 HAT repeats span residues 61 to 93 (DYKL…WEES), 95 to 127 (KEIQ…MEMK), 129 to 161 (RQVN…MEEM), 163 to 194 (GNVA…FELR), 196 to 227 (KEVE…FEEK), 229 to 264 (AYFA…FEEN), 266 to 300 (KEFE…FEKK), 310 to 342 (IIVS…LVES), 344 to 378 (AEAD…LWVN), 388 to 424 (KDPE…FEIR), 459 to 491 (REFD…LETI), 493 to 527 (GDIE…FEIE), 529 to 560 (EETE…FELS), 565 to 606 (GSVA…EFGT), 608 to 646 (SDKE…YIFP), and 648 to 673 (DAAN…EREA). Positions 250–467 (MDEHLYVAFA…LREFDRCRKL (218 aa)) are mediates interaction with HSP90. Serine 342 is subject to Phosphoserine. Residues 618–626 (PEKVKKRRK) carry the Nuclear localization signal motif. The segment covering 667-679 (QQQEREAAEQDPD) has biased composition (basic and acidic residues). The tract at residues 667–690 (QQQEREAAEQDPDKDIDESESSSF) is disordered. Acidic residues predominate over residues 680-690 (KDIDESESSSF). Serine 689 carries the post-translational modification Phosphoserine.

This sequence belongs to the crooked-neck family. In terms of assembly, identified in the spliceosome C complex. Present in a spliceosome complex assembled in vitro containing CRNKL1, HPRP8BP and SNRPB2. Component of the minor spliceosome, which splices U12-type introns. Interacts with PPIL2 (via the PPIase cyclophilin-type domain); they may form a trimeric complex with HSP90.

Its subcellular location is the nucleus. The protein localises to the nucleus speckle. In terms of biological role, involved in pre-mRNA splicing process. As a component of the minor spliceosome, involved in the splicing of U12-type introns in pre-mRNAs. The polypeptide is Crooked neck-like protein 1 (Crnkl1) (Mus musculus (Mouse)).